The sequence spans 360 residues: Phosphoserine aminotransferase (360 aa).

R42 contributes to the L-glutamate binding site. Pyridoxal 5'-phosphate is bound by residues W102, T152, D171, and Q194. The residue at position 195 (K195) is an N6-(pyridoxal phosphate)lysine. Position 237-238 (237-238) interacts with pyridoxal 5'-phosphate; the sequence is NT.

Belongs to the class-V pyridoxal-phosphate-dependent aminotransferase family. SerC subfamily. In terms of assembly, homodimer. Pyridoxal 5'-phosphate is required as a cofactor.

The protein resides in the cytoplasm. It catalyses the reaction O-phospho-L-serine + 2-oxoglutarate = 3-phosphooxypyruvate + L-glutamate. The enzyme catalyses 4-(phosphooxy)-L-threonine + 2-oxoglutarate = (R)-3-hydroxy-2-oxo-4-phosphooxybutanoate + L-glutamate. Its pathway is amino-acid biosynthesis; L-serine biosynthesis; L-serine from 3-phospho-D-glycerate: step 2/3. The protein operates within cofactor biosynthesis; pyridoxine 5'-phosphate biosynthesis; pyridoxine 5'-phosphate from D-erythrose 4-phosphate: step 3/5. Catalyzes the reversible conversion of 3-phosphohydroxypyruvate to phosphoserine and of 3-hydroxy-2-oxo-4-phosphonooxybutanoate to phosphohydroxythreonine. In Coxiella burnetii (strain Dugway 5J108-111), this protein is Phosphoserine aminotransferase.